An 84-amino-acid polypeptide reads, in one-letter code: MFQSTFFLVLMVCVATARFANKDHCPPNEEYNECGNPCQEKCDNGEPVICTYQCEHRCFCKQGYVRLTEDGECVPEEFCKPIHY.

Positions 1 to 22 are cleaved as a signal peptide; sequence MFQSTFFLVLMVCVATARFANK. 5 disulfides stabilise this stretch: Cys25–Cys58, Cys34–Cys54, Cys38–Cys50, Cys42–Cys79, and Cys60–Cys73. One can recognise a TIL domain in the interval 25–79; it reads CPPNEEYNECGNPCQEKCDNGEPVICTYQCEHRCFCKQGYVRLTEDGECVPEEFC.

This sequence belongs to the serine protease inhibitor-like (TIL domain-containing) family.

It is found in the secreted. Inhibits alpha-chymotrypsin, but not trypsin. This chain is Chymotrypsin inhibitor Ani s 6, found in Anisakis simplex (Herring worm).